Consider the following 359-residue polypeptide: Peptide chain release factor 1 (359 aa).

Residue Gln-236 is modified to N5-methylglutamine. The interval 288–307 is disordered; that stretch reads QDEQDAERKSTIGTGDRSER. The span at 293–307 shows a compositional bias: basic and acidic residues; the sequence is AERKSTIGTGDRSER.

This sequence belongs to the prokaryotic/mitochondrial release factor family. Methylated by PrmC. Methylation increases the termination efficiency of RF1.

The protein resides in the cytoplasm. Functionally, peptide chain release factor 1 directs the termination of translation in response to the peptide chain termination codons UAG and UAA. This Streptococcus sanguinis (strain SK36) protein is Peptide chain release factor 1.